The chain runs to 200 residues: Recombination protein RecR (200 aa).

The C4-type zinc finger occupies 58–75; it reads CSNCFCLKISQTSPCNFC. The region spanning 82-177 is the Toprim domain; the sequence is SSLCIVATPK…KISRLALGMP (96 aa).

Belongs to the RecR family.

In terms of biological role, may play a role in DNA repair. It seems to be involved in an RecBC-independent recombinational process of DNA repair. It may act with RecF and RecO. The polypeptide is Recombination protein RecR (Chlamydia trachomatis serovar D (strain ATCC VR-885 / DSM 19411 / UW-3/Cx)).